Reading from the N-terminus, the 162-residue chain is Large ribosomal subunit protein uL30 (162 aa).

Belongs to the universal ribosomal protein uL30 family. In terms of assembly, part of the 50S ribosomal subunit.

The sequence is that of Large ribosomal subunit protein uL30 from Staphylothermus marinus (strain ATCC 43588 / DSM 3639 / JCM 9404 / F1).